A 281-amino-acid polypeptide reads, in one-letter code: Transcription factor E2F6 (281 aa).

Lys-9 is covalently cross-linked (Glycyl lysine isopeptide (Lys-Gly) (interchain with G-Cter in SUMO2)). The DNA-binding element occupies 50–129; it reads YVSMRKALKV…SKNHIRWIGS (80 aa). A DEF box motif is present at residues 95–129; the sequence is KLGVRKRRVYDITNVLDGIDLVEKKSKNHIRWIGS. The segment at 130 to 222 is dimerization; that stretch reads DLSNFGAVPQ…PAPREDSITV (93 aa). The leucine-zipper stretch occupies residues 143 to 164; the sequence is LQEELSDLSAMEDALDELIKDC. Positions 173 to 281 are transcription repression; sequence DDKENERLAY…QSEELLEVSN (109 aa). The disordered stretch occupies residues 241 to 281; sequence GQTSNKRSEGVGTSSSESTHPEGPEEEENPQQSEELLEVSN.

Belongs to the E2F/DP family. Forms heterodimers with DP family members TFDP1 or TFDP2. Component of the DRTF1/E2F transcription factor complex. Part of the E2F6.com-1 complex in G0 phase composed of E2F6, MGA, MAX, TFDP1, CBX3, BAT8, EUHMTASE1, RING1, RNF2, MBLR, L3MBTL2 and YAF2. Component of some MLL1/MLL complex, at least composed of the core components KMT2A/MLL1, ASH2L, HCFC1/HCF1, WDR5 and RBBP5, as well as the facultative components BACC1, CHD8, E2F6, HSP70, INO80C, KANSL1, LAS1L, MAX, MCRS1, MGA, KAT8/MOF, PELP1, PHF20, PRP31, RING2, RUVB1/TIP49A, RUVB2/TIP49B, SENP3, TAF1, TAF4, TAF6, TAF7, TAF9 and TEX10. Expressed in all tissues examined. Highest levels in placenta, skeletal muscle, heart, ovary, kidney, small intestine and spleen.

Its subcellular location is the nucleus. In terms of biological role, inhibitor of E2F-dependent transcription. Binds DNA cooperatively with DP proteins through the E2 recognition site, 5'-TTTC[CG]CGC-3'. Has a preference for the 5'-TTTCCCGC-3' E2F recognition site. E2F6 lacks the transcriptional activation and pocket protein binding domains. Appears to regulate a subset of E2F-dependent genes whose products are required for entry into the cell cycle but not for normal cell cycle progression. Represses expression of some meiosis-specific genes, including SLC25A31/ANT4. May silence expression via the recruitment of a chromatin remodeling complex containing histone H3-K9 methyltransferase activity. Overexpression delays the exit of cells from the S-phase. The polypeptide is Transcription factor E2F6 (Homo sapiens (Human)).